The sequence spans 201 residues: Peptide deformylase (201 aa).

Residues Cys-121 and His-163 each contribute to the Fe cation site. Glu-164 is a catalytic residue. His-167 contacts Fe cation.

The protein belongs to the polypeptide deformylase family. The cofactor is Fe(2+).

The enzyme catalyses N-terminal N-formyl-L-methionyl-[peptide] + H2O = N-terminal L-methionyl-[peptide] + formate. In terms of biological role, removes the formyl group from the N-terminal Met of newly synthesized proteins. Requires at least a dipeptide for an efficient rate of reaction. N-terminal L-methionine is a prerequisite for activity but the enzyme has broad specificity at other positions. The protein is Peptide deformylase of Parasynechococcus marenigrum (strain WH8102).